A 408-amino-acid polypeptide reads, in one-letter code: MAISYDLRPVGSCLERKTDNIVVKESSKLSLIGLSQDEIVQALKTVGVPERQTRMRARQLWHWLYVRGVSNFDEMLNISKVMQETLKHHFSIARPEIVGEQISKDGTRKWLLRFPARGAGRPVEIETVYIPEEGRGTLCLSSQVGCTLTCSFCHTGTQMLVRNLTAEEILAQLLVARDCLGDFPDKNTPDGAIVPVEGRKVTNIVMMGMGEPLYNYEAVKKALLIASDGDGLSLSKRRITLSTSGVVPGIIRTGEEIGVMLAISLHAVHDTVRDMLVPINKKYPLTLLMDACRNYPGLSNAKRITFEYVMLKDINDSLDDAKRLIQLLKGIPAKINLIPFNPWPGSNYQCSDWEQIERFADVVNQAGYASPIRTPRGRDILAACGQLKSASERLRKSERLKLENAIGH.

Glutamate 126 serves as the catalytic Proton acceptor. The Radical SAM core domain maps to 132–373; it reads EEGRGTLCLS…NQAGYASPIR (242 aa). The cysteines at positions 139 and 384 are disulfide-linked. [4Fe-4S] cluster is bound by residues cysteine 146, cysteine 150, and cysteine 153. Residues 210–211, serine 242, 264–266, and asparagine 341 each bind S-adenosyl-L-methionine; these read GE and SLH. Cysteine 384 serves as the catalytic S-methylcysteine intermediate.

This sequence belongs to the radical SAM superfamily. RlmN family. Requires [4Fe-4S] cluster as cofactor.

Its subcellular location is the cytoplasm. The enzyme catalyses adenosine(2503) in 23S rRNA + 2 reduced [2Fe-2S]-[ferredoxin] + 2 S-adenosyl-L-methionine = 2-methyladenosine(2503) in 23S rRNA + 5'-deoxyadenosine + L-methionine + 2 oxidized [2Fe-2S]-[ferredoxin] + S-adenosyl-L-homocysteine. It carries out the reaction adenosine(37) in tRNA + 2 reduced [2Fe-2S]-[ferredoxin] + 2 S-adenosyl-L-methionine = 2-methyladenosine(37) in tRNA + 5'-deoxyadenosine + L-methionine + 2 oxidized [2Fe-2S]-[ferredoxin] + S-adenosyl-L-homocysteine. In terms of biological role, specifically methylates position 2 of adenine 2503 in 23S rRNA and position 2 of adenine 37 in tRNAs. m2A2503 modification seems to play a crucial role in the proofreading step occurring at the peptidyl transferase center and thus would serve to optimize ribosomal fidelity. The sequence is that of Dual-specificity RNA methyltransferase RlmN from Bartonella tribocorum (strain CIP 105476 / IBS 506).